The primary structure comprises 188 residues: Pyridoxal 5'-phosphate synthase subunit PdxT (188 aa).

46-48 (GES) contacts L-glutamine. The active-site Nucleophile is C78. L-glutamine contacts are provided by residues R105 and 134 to 135 (IR). Active-site charge relay system residues include H170 and E172.

This sequence belongs to the glutaminase PdxT/SNO family. In terms of assembly, in the presence of PdxS, forms a dodecamer of heterodimers. Only shows activity in the heterodimer.

It carries out the reaction aldehydo-D-ribose 5-phosphate + D-glyceraldehyde 3-phosphate + L-glutamine = pyridoxal 5'-phosphate + L-glutamate + phosphate + 3 H2O + H(+). It catalyses the reaction L-glutamine + H2O = L-glutamate + NH4(+). It participates in cofactor biosynthesis; pyridoxal 5'-phosphate biosynthesis. Catalyzes the hydrolysis of glutamine to glutamate and ammonia as part of the biosynthesis of pyridoxal 5'-phosphate. The resulting ammonia molecule is channeled to the active site of PdxS. The protein is Pyridoxal 5'-phosphate synthase subunit PdxT of Clostridium kluyveri (strain ATCC 8527 / DSM 555 / NBRC 12016 / NCIMB 10680 / K1).